Consider the following 211-residue polypeptide: MITGKLITVEGPDGAGKTTVLEQLIPPLKQKVAQEILTTREPGGVAISEYIRELILDINHTTMDPKTELLLYIAARRQHLVEKVLPALEAGQLVFIDRFIDSSVAYQGAGRGLIKADIQWLNEFATDGLEPDLTLYFDVPSEIGLARINANQQREVNRLDLETIEIHQRVRKGYLALAKEHPKRIVTIDATKPLKEVVSVALEHVLALLLA.

Gly11–Thr18 lines the ATP pocket.

The protein belongs to the thymidylate kinase family.

The catalysed reaction is dTMP + ATP = dTDP + ADP. In terms of biological role, phosphorylation of dTMP to form dTDP in both de novo and salvage pathways of dTTP synthesis. This is Thymidylate kinase from Streptococcus pyogenes serotype M18 (strain MGAS8232).